Consider the following 296-residue polypeptide: Phosphoribosylaminoimidazole-succinocarboxamide synthase (296 aa).

It belongs to the SAICAR synthetase family.

It catalyses the reaction 5-amino-1-(5-phospho-D-ribosyl)imidazole-4-carboxylate + L-aspartate + ATP = (2S)-2-[5-amino-1-(5-phospho-beta-D-ribosyl)imidazole-4-carboxamido]succinate + ADP + phosphate + 2 H(+). It participates in purine metabolism; IMP biosynthesis via de novo pathway; 5-amino-1-(5-phospho-D-ribosyl)imidazole-4-carboxamide from 5-amino-1-(5-phospho-D-ribosyl)imidazole-4-carboxylate: step 1/2. This Lachnospira eligens (strain ATCC 27750 / DSM 3376 / VPI C15-48 / C15-B4) (Eubacterium eligens) protein is Phosphoribosylaminoimidazole-succinocarboxamide synthase.